The sequence spans 232 residues: BTB/POZ domain-containing protein KCTD11 (232 aa).

Residues 1-49 form the BTB domain; it reads MLGAMFRADTLMPANLNPQGDGHYFIDRDGKAFRHILNFLRLGRLDLPR.

In terms of assembly, homopentamer. Interacts with KCTD6 and KCTD21; KCTD11 and KCTD6 or KCTD21 may associate in pentameric assemblies. Component of the BCR(KCTD11) E3 ubiquitin ligase complex, at least composed of CUL3 and KCTD11 and RBX1. Interacts (via BTB domain) with CUL3; initially a 4:4 stoichiometry has been reported, however, electron microscopy revealed pentameric states of the BTB domain. Weakly expressed in lung. In the cerebellum, higher expression in non proliferating external granule cells layer than in highly proliferating ones.

It functions in the pathway protein modification; protein ubiquitination. Functionally, plays a role as a marker and a regulator of neuronal differentiation; Up-regulated by a variety of neurogenic signals, such as retinoic acid, epidermal growth factor/EGF and NGFB/nerve growth factor. Induces apoptosis, growth arrest and the expression of cyclin-dependent kinase inhibitor CDKN1B. Plays a role as a tumor repressor and inhibits cell growth and tumorigenicity of medulloblastoma (MDB). Acts as a probable substrate-specific adapter for a BCR (BTB-CUL3-RBX1) E3 ubiquitin-protein ligase complex towards HDAC1. Functions as antagonist of the Hedgehog pathway on cell proliferation and differentiation by affecting the nuclear transfer of transcription factor GLI1, thus maintaining cerebellar granule cells in undifferentiated state, this effect probably occurs via HDAC1 down-regulation, keeping GLI1 acetylated and inactive. When knock-down, Hedgehog antagonism is impaired and proliferation of granule cells is sustained. Activates the caspase cascade. The protein is BTB/POZ domain-containing protein KCTD11 (Kctd11) of Mus musculus (Mouse).